The primary structure comprises 465 residues: Putative mannose-1-phosphate guanylyltransferase (465 aa).

It belongs to the mannose-6-phosphate isomerase type 2 family.

It catalyses the reaction alpha-D-mannose 1-phosphate + GTP + H(+) = GDP-alpha-D-mannose + diphosphate. The protein operates within nucleotide-sugar biosynthesis; GDP-alpha-D-mannose biosynthesis; GDP-alpha-D-mannose from alpha-D-mannose 1-phosphate (GTP route): step 1/1. Its pathway is bacterial outer membrane biogenesis; LPS O-antigen biosynthesis. The sequence is that of Putative mannose-1-phosphate guanylyltransferase (rfbA) from Vibrio cholerae serotype O1 (strain ATCC 39315 / El Tor Inaba N16961).